The following is a 208-amino-acid chain: Truncated thymidylate kinase (208 aa).

Belongs to the thymidylate kinase family.

Functionally, catalyzes the conversion of dTMP to dTDP. This chain is Truncated thymidylate kinase (TMK), found in Ornithodoros (relapsing fever ticks).